A 612-amino-acid chain; its full sequence is Sulfite reductase [NADPH] flavoprotein alpha-component (612 aa).

The region spanning 64-202 (VTLISASQTG…QAQQWRQQVV (139 aa)) is the Flavodoxin-like domain. FMN contacts are provided by residues 70-75 (SQTGNA), 117-120 (STQG), and 153-162 (LGDTSYEHFC). Residues 247 to 461 (TAPLTAQLSV…IEHNDNFRLP (215 aa)) form the FAD-binding FR-type domain. FAD-binding positions include T335, K369, 399-402 (RLYS), 417-419 (TVG), Y423, and 432-435 (GGAS). NADP(+)-binding positions include 532-533 (SR), 538-542 (KIYVQ), and D574. Y612 serves as a coordination point for FAD.

Belongs to the NADPH-dependent sulphite reductase flavoprotein subunit CysJ family. This sequence in the N-terminal section; belongs to the flavodoxin family. It in the C-terminal section; belongs to the flavoprotein pyridine nucleotide cytochrome reductase family. Alpha(8)-beta(8). The alpha component is a flavoprotein, the beta component is a hemoprotein. The cofactor is FAD. FMN is required as a cofactor.

The catalysed reaction is hydrogen sulfide + 3 NADP(+) + 3 H2O = sulfite + 3 NADPH + 4 H(+). It functions in the pathway sulfur metabolism; hydrogen sulfide biosynthesis; hydrogen sulfide from sulfite (NADPH route): step 1/1. In terms of biological role, component of the sulfite reductase complex that catalyzes the 6-electron reduction of sulfite to sulfide. This is one of several activities required for the biosynthesis of L-cysteine from sulfate. The flavoprotein component catalyzes the electron flow from NADPH -&gt; FAD -&gt; FMN to the hemoprotein component. The chain is Sulfite reductase [NADPH] flavoprotein alpha-component from Yersinia pseudotuberculosis serotype O:1b (strain IP 31758).